The primary structure comprises 251 residues: uncharacterized protein (251 aa).

This is an uncharacterized protein from Methanothermus fervidus.